A 150-amino-acid polypeptide reads, in one-letter code: Large ribosomal subunit protein bL9 (150 aa).

This sequence belongs to the bacterial ribosomal protein bL9 family.

In terms of biological role, binds to the 23S rRNA. In Ralstonia nicotianae (strain ATCC BAA-1114 / GMI1000) (Ralstonia solanacearum), this protein is Large ribosomal subunit protein bL9.